Consider the following 108-residue polypeptide: NADH dehydrogenase [ubiquinone] flavoprotein 3, mitochondrial (108 aa).

A mitochondrion-targeting transit peptide spans 1 to 34 (MAAPCLLRQGRAGALKTMLQEAQVFRGLASTVSL). The segment at 33 to 72 (SLSAESGKSEKGQPQNSKKQSPPKKPAPVPAEPFDNTTYK) is disordered. A Phosphoserine modification is found at Ser-105.

The protein belongs to the complex I NDUFV3 subunit family. As to quaternary structure, complex I is composed of 45 different subunits. This is a component of the flavoprotein-sulfur (FP) fragment of the enzyme.

Its subcellular location is the mitochondrion inner membrane. In terms of biological role, accessory subunit of the mitochondrial membrane respiratory chain NADH dehydrogenase (Complex I), that is believed not to be involved in catalysis. Complex I functions in the transfer of electrons from NADH to the respiratory chain. The immediate electron acceptor for the enzyme is believed to be ubiquinone. May be the terminally assembled subunit of Complex I. This Homo sapiens (Human) protein is NADH dehydrogenase [ubiquinone] flavoprotein 3, mitochondrial (NDUFV3).